The sequence spans 259 residues: Sugar fermentation stimulation protein homolog (259 aa).

It belongs to the SfsA family.

The chain is Sugar fermentation stimulation protein homolog from Chloroflexus aurantiacus (strain ATCC 29364 / DSM 637 / Y-400-fl).